Consider the following 1218-residue polypeptide: DNA polymerase subunit gamma-1 (1218 aa).

Residues leucine 31–glycine 50 are disordered. The Exo I motif lies at valine 179 to glutamate 183. Aspartate 181 functions as the Exonuclease activity in the catalytic mechanism. Residues valine 250–arginine 258 carry the Exo II motif. Serine 289 lines the DNA pocket. The Exo III signature appears at tyrosine 378 to threonine 386. The segment at lysine 484 to serine 524 is disordered. Residues alanine 492–glycine 553 form an accessory-interacting determinant region. The segment covering methionine 507 to glutamate 520 has biased composition (acidic residues). Arginine 561 is an RNA binding site. Serine 575 contacts DNA. 3 residues coordinate RNA: histidine 733, glycine 742, and lysine 747. DNA contacts are provided by lysine 785 and threonine 828. The trigger loop stretch occupies residues threonine 837–asparagine 843. 2 residues coordinate RNA: serine 842 and arginine 848. Residues valine 866–leucine 875 carry the Pol A motif. 7 residues coordinate a 2'-deoxyribonucleoside 5'-triphosphate: aspartate 869, valine 870, serine 872, glutamate 874, arginine 922, lysine 926, and tyrosine 930. Mg(2+)-binding residues include aspartate 869 and valine 870. Positions arginine 922–glycine 937 match the Pol B motif. DNA is bound by residues threonine 1073 and serine 1074. The Pol C signature appears at histidine 1113 to valine 1120. Aspartate 1114 is a binding site for a 2'-deoxyribonucleoside 5'-triphosphate. Residue aspartate 1114 coordinates Mg(2+).

This sequence belongs to the DNA polymerase type-A family. Heterotrimer composed of a catalytic subunit and a homodimer of accessory subunits (POLG:POLG2). Interacts with TTC3. Interacts with LIG3. It depends on Mg(2+) as a cofactor.

The protein localises to the mitochondrion. Its subcellular location is the mitochondrion matrix. It is found in the mitochondrion nucleoid. It catalyses the reaction DNA(n) + a 2'-deoxyribonucleoside 5'-triphosphate = DNA(n+1) + diphosphate. The catalysed reaction is a 3'-end 2'-deoxyribonucleotidyl-deoxyribonucleotide-DNA + H2O = a 3'-end 2'-deoxyribonucleotide-DNA + a 2'-deoxyribonucleoside 5'-phosphate + H(+). The enzyme catalyses a 5'-end 2'-deoxyribose-2'-deoxyribonucleotide-DNA = (2E,4S)-4-hydroxypenten-2-al-5-phosphate + a 5'-end 5'-phospho-2'-deoxyribonucleoside-DNA + H(+). With respect to regulation, inhibited by dideoxynucleotides such as antiviral agent zalcitabine. Functionally, catalytic subunit of DNA polymerase gamma solely responsible for replication of mitochondrial DNA (mtDNA). Replicates both heavy and light strands of the circular mtDNA genome using a single-stranded DNA template, RNA primers and the four deoxyribonucleoside triphosphates as substrates. Has 5' -&gt; 3' polymerase activity. Functionally interacts with TWNK and SSBP1 at the replication fork to form a highly processive replisome, where TWNK unwinds the double-stranded DNA template prior to replication and SSBP1 covers the parental heavy strand to enable continuous replication of the entire mitochondrial genome. A single nucleotide incorporation cycle includes binding of the incoming nucleotide at the insertion site, a phosphodiester bond formation reaction that extends the 3'-end of the primer DNA, and translocation of the primer terminus to the post-insertion site. After completing replication of a mtDNA strand, mediates 3' -&gt; 5' exonucleolytic degradation at the nick to enable proper ligation. Highly accurate due to high nucleotide selectivity and 3' -&gt; 5' exonucleolytic proofreading. Proficiently corrects base substitutions, single-base additions and deletions in non-repetitive sequences and short repeats, but displays lower proofreading activity when replicating longer homopolymeric stretches. Exerts exonuclease activity toward single-stranded DNA and double-stranded DNA containing 3'-terminal mispairs. When a misincorporation occurs, transitions from replication to a pro-nucleolytic editing mode and removes the missincorporated nucleoside in the exonuclease active site. Proceeds via an SN2 nucleolytic mechanism in which Asp-198 catalyzes phosphodiester bond hydrolysis and Glu-200 stabilizes the leaving group. As a result the primer strand becomes one nucleotide shorter and is positioned in the post-insertion site, ready to resume DNA synthesis. Exerts 5'-deoxyribose phosphate (dRP) lyase activity and mediates repair-associated mtDNA synthesis (gap filling) in base-excision repair pathway. Catalyzes the release of the 5'-terminal 2-deoxyribose-5-phosphate sugar moiety from incised apurinic/apyrimidinic (AP) sites to produce a substrate for DNA ligase. The dRP lyase reaction does not require divalent metal ions and likely proceeds via a Schiff base intermediate in a beta-elimination reaction mechanism. In Mus musculus (Mouse), this protein is DNA polymerase subunit gamma-1.